A 299-amino-acid polypeptide reads, in one-letter code: NAD kinase (299 aa).

The active-site Proton acceptor is the aspartate 75. NAD(+) is bound by residues aspartate 75–glycine 76, asparagine 149–aspartate 150, arginine 177, aspartate 179, threonine 190–serine 195, alanine 214, and glutamine 248.

Belongs to the NAD kinase family. A divalent metal cation is required as a cofactor.

The protein localises to the cytoplasm. The catalysed reaction is NAD(+) + ATP = ADP + NADP(+) + H(+). In terms of biological role, involved in the regulation of the intracellular balance of NAD and NADP, and is a key enzyme in the biosynthesis of NADP. Catalyzes specifically the phosphorylation on 2'-hydroxyl of the adenosine moiety of NAD to yield NADP. The polypeptide is NAD kinase (Burkholderia thailandensis (strain ATCC 700388 / DSM 13276 / CCUG 48851 / CIP 106301 / E264)).